The following is a 466-amino-acid chain: MKSTVEQLSPTRVRINVEVPFAELEPDFQRAYKELAKQVRLPGFRPGKAPAKLLEARIGREAMLDQIVNDALPSRYGQAVAESDVQPLGRPNIEVTKKEYGQDLQFTAEVDIRPKISPPDLSALTVSVDPIEIGEDDVDAELQSLRTRFGTLTAVDRPVAVGDVVSIDLSATVDGEDIPNAAAEGLSHEVGSGRLIAGLDDAVVGLSADESRVFTAKLAAGEHAGQEAQVTVTVRSVKERELPEPDDEFAQLASEFDSIDELRASLSDQVRQAKRAQQAEQIRNATIDALLEQVDVPLPESYVQAQFDSVLHSALSGLNHDEARFNELLVEQGSSRAAFDAEARTASEKDVKRQLLLDALADELQVQVGQDDLTERLVTTSRQYGIEPQQLFGYLQERNQLPTMFADVRRELAIRAAVEAATVTDSDGNTIDTSEFFGKRVSAGEAEEAEPADEGAARAASDEATT.

In terms of domain architecture, PPIase FKBP-type spans 162–243 (GDVVSIDLSA…VRSVKERELP (82 aa)). A disordered region spans residues 428–466 (GNTIDTSEFFGKRVSAGEAEEAEPADEGAARAASDEATT). Residues 457–466 (ARAASDEATT) show a composition bias toward low complexity.

Belongs to the FKBP-type PPIase family. Tig subfamily.

The protein resides in the cytoplasm. It catalyses the reaction [protein]-peptidylproline (omega=180) = [protein]-peptidylproline (omega=0). In terms of biological role, involved in protein export. Acts as a chaperone by maintaining the newly synthesized protein in an open conformation. Functions as a peptidyl-prolyl cis-trans isomerase. The polypeptide is Trigger factor (Mycobacterium tuberculosis (strain ATCC 25177 / H37Ra)).